Reading from the N-terminus, the 153-residue chain is Riboflavin synthase (153 aa).

This sequence belongs to the DMRL synthase family. Homooligomer. Requires Mg(2+) as cofactor.

It catalyses the reaction 2 6,7-dimethyl-8-(1-D-ribityl)lumazine + H(+) = 5-amino-6-(D-ribitylamino)uracil + riboflavin. The protein operates within cofactor biosynthesis; riboflavin biosynthesis; riboflavin from 2-hydroxy-3-oxobutyl phosphate and 5-amino-6-(D-ribitylamino)uracil: step 2/2. Inhibited by EDTA. Its function is as follows. The relatively low activity of this enzyme suggested that 6,7-dimethyl-8-ribityllumazine might not be its natural substrate. The chain is Riboflavin synthase (ribC) from Methanothermobacter marburgensis (strain ATCC BAA-927 / DSM 2133 / JCM 14651 / NBRC 100331 / OCM 82 / Marburg) (Methanobacterium thermoautotrophicum).